A 239-amino-acid polypeptide reads, in one-letter code: NAD-dependent protein deacylase (239 aa).

Residues M1–M239 form the Deacetylase sirtuin-type domain. An NAD(+)-binding site is contributed by G8–W27. Residues Y52 and R55 each contribute to the substrate site. Q93–D96 contacts NAD(+). H111 serves as the catalytic Proton acceptor. NAD(+) contacts are provided by residues G182–S184, N207–D209, and A225.

The protein belongs to the sirtuin family. Class III subfamily.

Its subcellular location is the cytoplasm. It catalyses the reaction N(6)-acetyl-L-lysyl-[protein] + NAD(+) + H2O = 2''-O-acetyl-ADP-D-ribose + nicotinamide + L-lysyl-[protein]. The enzyme catalyses N(6)-succinyl-L-lysyl-[protein] + NAD(+) + H2O = 2''-O-succinyl-ADP-D-ribose + nicotinamide + L-lysyl-[protein]. In terms of biological role, NAD-dependent lysine deacetylase and desuccinylase that specifically removes acetyl and succinyl groups on target proteins. Modulates the activities of several proteins which are inactive in their acylated form. This is NAD-dependent protein deacylase from Rhodopirellula baltica (strain DSM 10527 / NCIMB 13988 / SH1).